Reading from the N-terminus, the 147-residue chain is Myosin-ID light chain (147 aa).

EF-hand domains follow at residues 8–43 (EAQS…LGQN), 79–114 (FDEK…LGER), and 115–147 (LPEE…MLKK). Ca(2+)-binding residues include D21, N23, D25, K27, and E32.

As to quaternary structure, myosin I is a dimer of a heavy and a light chain. Inability to self-assemble into filaments. Interacts with myoD. Does not interact with myoB or myoC.

The protein resides in the cytoplasm. Functions as the light chain for myosin-D. Has low affinity for calcium. The polypeptide is Myosin-ID light chain (mlcD) (Dictyostelium discoideum (Social amoeba)).